Here is a 969-residue protein sequence, read N- to C-terminus: Levansucrase (969 aa).

The N-terminal stretch at 1-52 (MDITVNSQSNTVAPKQAECKKMRYSIRKVATVGATSALVGTLAFLGATQVKA) is a signal peptide. The segment covering 89–103 (SEAVESSVAHSEVAT) has biased composition (low complexity). A disordered region spans residues 89 to 169 (SEAVESSVAH…STASSEAADT (81 aa)). Polar residues predominate over residues 106-116 (VTETQPSNTTP). The span at 124 to 166 (SSTVVTSSSDATTPSATVAAVSAPAHTSEAAVEAPTSTASSEA) shows a compositional bias: low complexity. Sucrose-binding residues include Trp-286, Asp-287, and Ser-356. Catalysis depends on Asp-287, which acts as the Nucleophile. Asp-443 lines the Ca(2+) pocket. Sucrose contacts are provided by Arg-448 and Asp-449. 3 residues coordinate Ca(2+): Gln-473, Asn-512, and Asp-544. Glu-545 contributes to the sucrose binding site. Residue Glu-547 is the Proton donor/acceptor of the active site. Arg-565 contributes to the sucrose binding site. Disordered stretches follow at residues 746-843 (VKDG…VGDR) and 860-934 (IVAT…SEGS). Over residues 747-758 (KDGKDKKADKPE) the composition is skewed to basic and acidic residues. Polar residues predominate over residues 776–789 (KPGTSKPADNNQPS). The segment covering 872–910 (VKEESVTETEAPKPVKSEEKVQSHGVDKANEVTKSDESS) has biased composition (basic and acidic residues). The segment covering 924–934 (TPKTPSDSEGS) has biased composition (polar residues). A helical transmembrane segment spans residues 938–958 (ILSILATIFAAIASLALLGYG).

It belongs to the glycosyl hydrolase 68 family.

The protein resides in the cell membrane. It localises to the cell surface. It carries out the reaction [6)-beta-D-fructofuranosyl-(2-&gt;](n) alpha-D-glucopyranoside + sucrose = [6)-beta-D-fructofuranosyl-(2-&gt;](n+1) alpha-D-glucopyranoside + D-glucose. Ca(2+) may play an important structural role and promote stability of levansucrase. In terms of biological role, catalyzes the synthesis of levan, a fructose polymer, by transferring the fructosyl moiety from sucrose to a growing acceptor molecule. Also displays sucrose hydrolase activity. This is Levansucrase from Streptococcus salivarius.